We begin with the raw amino-acid sequence, 545 residues long: Chaperonin GroEL (545 aa).

ATP contacts are provided by residues 30 to 33, Lys-51, 87 to 91, Gly-413, 477 to 479, and Asp-493; these read TLGP, DGTTT, and NAA.

Belongs to the chaperonin (HSP60) family. Forms a cylinder of 14 subunits composed of two heptameric rings stacked back-to-back. Interacts with the co-chaperonin GroES.

Its subcellular location is the cytoplasm. It carries out the reaction ATP + H2O + a folded polypeptide = ADP + phosphate + an unfolded polypeptide.. In terms of biological role, together with its co-chaperonin GroES, plays an essential role in assisting protein folding. The GroEL-GroES system forms a nano-cage that allows encapsulation of the non-native substrate proteins and provides a physical environment optimized to promote and accelerate protein folding. This chain is Chaperonin GroEL, found in Pseudomonas putida (Arthrobacter siderocapsulatus).